A 142-amino-acid chain; its full sequence is Transcriptional regulator MraZ (142 aa).

SpoVT-AbrB domains follow at residues 5–51 (ASSL…PRNE) and 77–120 (AMDV…DAAT).

This sequence belongs to the MraZ family. Forms oligomers.

Its subcellular location is the cytoplasm. It localises to the nucleoid. The polypeptide is Transcriptional regulator MraZ (Polaromonas sp. (strain JS666 / ATCC BAA-500)).